We begin with the raw amino-acid sequence, 104 residues long: Endogenous retrovirus group K member 21 Rec protein (104 aa).

The interval M1–T48 is disordered. A compositionally biased stretch (basic residues) spans A10–R20. Positions R13–R20 match the Nuclear localization signal motif. The short motif at W49 to L58 is the Nuclear export signal element.

As to quaternary structure, forms homodimers, homotrimers, and homotetramers via a C-terminal domain. Associates with XPO1 and with ZNF145.

It localises to the cytoplasm. The protein resides in the nucleus. The protein localises to the nucleolus. Retroviral replication requires the nuclear export and translation of unspliced, singly-spliced and multiply-spliced derivatives of the initial genomic transcript. Rec interacts with a highly structured RNA element (RcRE) present in the viral 3'LTR and recruits the cellular nuclear export machinery. This permits export to the cytoplasm of unspliced genomic or incompletely spliced subgenomic viral transcripts. The sequence is that of Endogenous retrovirus group K member 21 Rec protein (ERVK-21) from Homo sapiens (Human).